A 131-amino-acid polypeptide reads, in one-letter code: Large ribosomal subunit protein uL22 (131 aa).

Over residues 1-11 the composition is skewed to basic residues; sequence MAKGHRSKIKR. Positions 1 to 20 are disordered; the sequence is MAKGHRSKIKRERNEVRDTR.

The protein belongs to the universal ribosomal protein uL22 family. In terms of assembly, part of the 50S ribosomal subunit.

Its function is as follows. This protein binds specifically to 23S rRNA; its binding is stimulated by other ribosomal proteins, e.g. L4, L17, and L20. It is important during the early stages of 50S assembly. It makes multiple contacts with different domains of the 23S rRNA in the assembled 50S subunit and ribosome. The globular domain of the protein is located near the polypeptide exit tunnel on the outside of the subunit, while an extended beta-hairpin is found that lines the wall of the exit tunnel in the center of the 70S ribosome. The sequence is that of Large ribosomal subunit protein uL22 from Agathobacter rectalis (strain ATCC 33656 / DSM 3377 / JCM 17463 / KCTC 5835 / VPI 0990) (Eubacterium rectale).